A 563-amino-acid chain; its full sequence is Efflux pump FUS6 (563 aa).

The segment at 1-30 is disordered; the sequence is MPQPDKMAAVNNAMPQPAPEKSLSSDPQPE. Transmembrane regions (helical) follow at residues 39–59, 75–95, 105–125, 138–158, and 167–187; these read WLIF…TSII, LYVW…PIFA, SLTL…GGAH, GIGG…MVSI, and IIGG…GAFA. N-linked (GlcNAc...) asparagine glycosylation occurs at Asn189. 3 consecutive transmembrane segments (helical) span residues 194 to 214, 233 to 253, and 261 to 281; these read WIFY…GLFL, WGGS…LSWG, and GWQT…FFAY. Asn299 carries N-linked (GlcNAc...) asparagine glycosylation. 6 helical membrane-spanning segments follow: residues 305 to 325, 340 to 360, 368 to 388, 401 to 421, 433 to 453, and 509 to 529; these read LLVI…FLPV, VMLF…GITI, VWHF…TLLD, ILFG…ILAS, AWTF…AAVF, and KVVW…CFFV. The N-linked (GlcNAc...) asparagine glycan is linked to Asn553.

It belongs to the major facilitator superfamily. TCR/Tet family.

The protein localises to the membrane. Functionally, efflux pump; part of the gene cluster that mediates the biosynthesis of the mycotoxin fusarin C. Within the cluster, FUS1, FUS2, FUS8 and FUS9 are sufficient for fusarin production. The other FUS cluster members are not essential for fusarin C biosynthesis. This is Efflux pump FUS6 from Gibberella moniliformis (strain M3125 / FGSC 7600) (Maize ear and stalk rot fungus).